Here is a 359-residue protein sequence, read N- to C-terminus: CMP-N-acetylneuraminate-poly-alpha-2,8-sialyltransferase (359 aa).

Topologically, residues 1–7 are cytoplasmic; sequence MRSIRKR. A helical; Signal-anchor for type II membrane protein transmembrane segment spans residues 8–20; the sequence is WTICTISLLLIFY. The Lumenal portion of the chain corresponds to 21 to 359; sequence KTKEIARTEE…KLTTGKCMKQ (339 aa). N-linked (GlcNAc...) asparagine glycosylation is found at N50, N74, and N119. Cystine bridges form between C142-C292 and C156-C356. CMP-N-acetyl-beta-neuraminate is bound by residues N147 and N170. N-linked (GlcNAc...) asparagine glycans are attached at residues N204 and N219. Positions 279, 280, 281, and 301 each coordinate CMP-N-acetyl-beta-neuraminate. The active-site Proton donor/acceptor is H331.

It belongs to the glycosyltransferase 29 family. In terms of processing, autopolysialylated.

It is found in the golgi apparatus membrane. It localises to the secreted. It carries out the reaction [N-acetyl-alpha-D-neuraminosyl-(2-&gt;8)](n) + CMP-N-acetyl-beta-neuraminate = [N-acetyl-alpha-D-neuraminosyl-(2-&gt;8)](n+1) + CMP + H(+). Its pathway is protein modification; protein glycosylation. Functionally, catalyzes the transfer of a sialic acid from a CMP-linked sialic acid donor onto a terminal alpha-2,3-, alpha-2,6-, or alpha-2,8-linked sialic acid of an N-linked glycan protein acceptor through alpha-2,8-linkages. Therefore, participates in polysialic acid synthesis on various sialylated N-acetyllactosaminyl oligosaccharides, including NCAM1 N-glycans, FETUB N-glycans and AHSG. It is noteworthy that alpha-2,3-linked sialic acid is apparently a better acceptor than alpha-2,6-linked sialic acid. The sequence is that of CMP-N-acetylneuraminate-poly-alpha-2,8-sialyltransferase from Cricetulus griseus (Chinese hamster).